The primary structure comprises 243 residues: ATP synthase subunit b, mitochondrial (243 aa).

This sequence belongs to the eukaryotic ATPase B chain family. F-type ATPases have 2 components, CF(1) - the catalytic core - and CF(0) - the membrane proton channel. CF(1) has five subunits: alpha(3), beta(3), gamma(1), delta(1), epsilon(1). CF(0) has three main subunits: a, b and c.

Its subcellular location is the mitochondrion. The protein localises to the mitochondrion inner membrane. Functionally, mitochondrial membrane ATP synthase (F(1)F(0) ATP synthase or Complex V) produces ATP from ADP in the presence of a proton gradient across the membrane which is generated by electron transport complexes of the respiratory chain. F-type ATPases consist of two structural domains, F(1) - containing the extramembraneous catalytic core, and F(0) - containing the membrane proton channel, linked together by a central stalk and a peripheral stalk. During catalysis, ATP synthesis in the catalytic domain of F(1) is coupled via a rotary mechanism of the central stalk subunits to proton translocation. Part of the complex F(0) domain and the peripheric stalk, which acts as a stator to hold the catalytic alpha(3)beta(3) subcomplex and subunit a/ATP6 static relative to the rotary elements. The protein is ATP synthase subunit b, mitochondrial of Drosophila melanogaster (Fruit fly).